The sequence spans 31 residues: Cytochrome b6-f complex subunit 6 (31 aa).

The helical transmembrane segment at 3–23 threads the bilayer; that stretch reads ILIGYIILLACAFGLAAGLFF.

Belongs to the PetL family. As to quaternary structure, the 4 large subunits of the cytochrome b6-f complex are cytochrome b6, subunit IV (17 kDa polypeptide, PetD), cytochrome f and the Rieske protein, while the 4 small subunits are PetG, PetL, PetM and PetN. The complex functions as a dimer.

It is found in the plastid. Its subcellular location is the chloroplast thylakoid membrane. Its function is as follows. Component of the cytochrome b6-f complex, which mediates electron transfer between photosystem II (PSII) and photosystem I (PSI), cyclic electron flow around PSI, and state transitions. PetL is important for photoautotrophic growth as well as for electron transfer efficiency and stability of the cytochrome b6-f complex. The protein is Cytochrome b6-f complex subunit 6 of Rhodomonas salina (Cryptomonas salina).